The chain runs to 409 residues: Accessory Sec system protein translocase subunit SecY2 (409 aa).

A run of 10 helical transmembrane segments spans residues 16-36 (ILITFSLIIIFLLGRYVPIPG), 61-81 (LSQVGVFSLGIGPMMTTMILL), 104-124 (VVMLVIAIIQGLAIAISFQYH), 132-152 (LLLATMILVTGAYIISWIGNL), 161-181 (MTILVVVGMLVGQFNNIPLIF), 190-210 (LAIILFLLWTLVAMYLMITFE), 242-262 (GMAFMYVYTLLMFPQYIIILL), 286-306 (GVVIYMILMLVLSVAFTFVNI), 341-361 (LFGTFSGFFMAFLGGVPLLFA), and 374-394 (TGIFMMITGMSFMILDEFQVI).

This sequence belongs to the SecY/SEC61-alpha family. SecY2 subfamily. In terms of assembly, component of the accessory SecA2/SecY2 protein translocase complex required to export cell wall proteins. May form heterotrimers with SecE and SecG subunits.

The protein localises to the cell membrane. Its function is as follows. Part of the accessory SecA2/SecY2 system specifically required for export of possible cell wall proteins. The central subunit of a protein translocation channel. This chain is Accessory Sec system protein translocase subunit SecY2, found in Streptococcus agalactiae serotype Ia (strain ATCC 27591 / A909 / CDC SS700).